Reading from the N-terminus, the 202-residue chain is Lymphotoxin-alpha (202 aa).

Positions 1-33 (MTPLGRLHLLRVLSTPPVFLLGLLLALPLGAQG) are cleaved as a signal peptide. In terms of domain architecture, THD spans 60 to 202 (PAAHLVGYPS…STVFFGAFAL (143 aa)). N-linked (GlcNAc...) asparagine glycosylation occurs at asparagine 93.

The protein belongs to the tumor necrosis factor family. As to quaternary structure, homotrimer, and heterotrimer of either two LTB and one LTA subunits or (less prevalent) two LTA and one LTB subunits. Interacts with TNFRSF14.

It is found in the secreted. The protein resides in the membrane. Its function is as follows. Cytokine that in its homotrimeric form binds to TNFRSF1A/TNFR1, TNFRSF1B/TNFBR and TNFRSF14/HVEM. In its heterotrimeric form with LTB binds to TNFRSF3/LTBR. Lymphotoxin is produced by lymphocytes and is cytotoxic for a wide range of tumor cells in vitro and in vivo. The chain is Lymphotoxin-alpha (Lta) from Rattus norvegicus (Rat).